A 181-amino-acid chain; its full sequence is Oligoribonuclease (181 aa).

One can recognise an Exonuclease domain in the interval 8 to 171; the sequence is LIWIDLEMTG…DDIRESVAEL (164 aa). Tyr-129 is a catalytic residue.

This sequence belongs to the oligoribonuclease family. Homodimer.

It is found in the cytoplasm. Functionally, 3'-to-5' exoribonuclease specific for small oligoribonucleotides. The protein is Oligoribonuclease of Escherichia coli O139:H28 (strain E24377A / ETEC).